An 85-amino-acid chain; its full sequence is Small ribosomal subunit protein bS18A (85 aa).

This sequence belongs to the bacterial ribosomal protein bS18 family. Part of the 30S ribosomal subunit. Forms a tight heterodimer with protein bS6.

Functionally, binds as a heterodimer with protein bS6 to the central domain of the 16S rRNA, where it helps stabilize the platform of the 30S subunit. The protein is Small ribosomal subunit protein bS18A of Mycolicibacterium smegmatis (strain ATCC 700084 / mc(2)155) (Mycobacterium smegmatis).